A 216-amino-acid polypeptide reads, in one-letter code: Inactive ribonuclease-like protein 10 (216 aa).

The signal sequence occupies residues 1–26 (MKLNLVQIFFMLLMLLLGLGMGLGLG). A disordered region spans residues 43–65 (EFWSSDSQDKAEATEEGDGTQTT).

The protein belongs to the pancreatic ribonuclease family. The N-terminus is blocked. Glycosylated.

Its subcellular location is the secreted. In terms of biological role, secreted proximal epididymal protein required for post-testicular sperm maturation and male fertility. May be involved in sperm adhesion to the egg zona pellucida. Does not have ribonuclease activity. This is Inactive ribonuclease-like protein 10 (RNASE10) from Homo sapiens (Human).